The primary structure comprises 316 residues: WEB family protein At3g13190 (316 aa).

Coiled coils occupy residues 42–90 (WNKE…MIND), 119–195 (EEES…AEEH), and 233–266 (RDET…MAQE). A disordered region spans residues 295 to 316 (STKEVLKSKPRSSSKEGCLVKC).

The protein belongs to the WEB family.

This Arabidopsis thaliana (Mouse-ear cress) protein is WEB family protein At3g13190.